The following is a 183-amino-acid chain: ATP synthase subunit delta (183 aa).

It belongs to the ATPase delta chain family. As to quaternary structure, F-type ATPases have 2 components, F(1) - the catalytic core - and F(0) - the membrane proton channel. F(1) has five subunits: alpha(3), beta(3), gamma(1), delta(1), epsilon(1). F(0) has three main subunits: a(1), b(2) and c(10-14). The alpha and beta chains form an alternating ring which encloses part of the gamma chain. F(1) is attached to F(0) by a central stalk formed by the gamma and epsilon chains, while a peripheral stalk is formed by the delta and b chains.

The protein resides in the cell inner membrane. F(1)F(0) ATP synthase produces ATP from ADP in the presence of a proton or sodium gradient. F-type ATPases consist of two structural domains, F(1) containing the extramembraneous catalytic core and F(0) containing the membrane proton channel, linked together by a central stalk and a peripheral stalk. During catalysis, ATP synthesis in the catalytic domain of F(1) is coupled via a rotary mechanism of the central stalk subunits to proton translocation. Functionally, this protein is part of the stalk that links CF(0) to CF(1). It either transmits conformational changes from CF(0) to CF(1) or is implicated in proton conduction. This is ATP synthase subunit delta from Thermotoga maritima (strain ATCC 43589 / DSM 3109 / JCM 10099 / NBRC 100826 / MSB8).